Consider the following 456-residue polypeptide: Glycine receptor subunit alpha-4 (456 aa).

The first 27 residues, 1–27, serve as a signal peptide directing secretion; it reads MTTLVPASLFLLLWTLPGKVLLSVALA. At 28-256 the chain is on the extracellular side; sequence KEDVKSGLKG…KFHLERQMGY (229 aa). A glycan (N-linked (GlcNAc...) asparagine) is linked at asparagine 71. Cystine bridges form between cysteine 171–cysteine 185 and cysteine 232–cysteine 243. Residue 236–241 participates in strychnine binding; that stretch reads YNTGKF. A helical membrane pass occupies residues 257-278; it reads YLIQMYIPSLLIVILSWVSFWI. Topologically, residues 279–283 are cytoplasmic; sequence NMDAA. Residues 284–304 form a helical membrane-spanning segment; sequence PARVGLGITTVLTMTTQSSGS. Over 305–315 the chain is Extracellular; sequence RASLPKVSYVK. A helical membrane pass occupies residues 316 to 336; sequence AIDIWMAVCLLFVFAALLEYA. Residues 337-423 lie on the Cytoplasmic side of the membrane; that stretch reads AVNFVSRQHK…YVDRAKRIDT (87 aa). Residues 424–444 traverse the membrane as a helical segment; the sequence is ISRAVFPFTFLVFNIFYWVVY. At 445 to 456 the chain is on the extracellular side; that stretch reads KVLRSEDIHQAL.

It belongs to the ligand-gated ion channel (TC 1.A.9) family. Glycine receptor (TC 1.A.9.3) subfamily. GLRA4 sub-subfamily. As to quaternary structure, homopentamer (in vitro). Heteropentamer composed of GLRA4 and GLRB. In terms of tissue distribution, detected in the retina inner plexiform layer, especially at the border between layer three and four (at protein level).

The protein resides in the postsynaptic cell membrane. It is found in the synapse. The protein localises to the perikaryon. Its subcellular location is the cell projection. It localises to the dendrite. The protein resides in the cell membrane. It catalyses the reaction chloride(in) = chloride(out). With respect to regulation, inhibited by strychnine. Its function is as follows. Glycine receptors are ligand-gated chloride channels. Channel opening is triggered by extracellular glycine. Channel opening is also triggered by taurine and beta-alanine. Plays a role in the down-regulation of neuronal excitability. Contributes to the generation of inhibitory postsynaptic currents. The protein is Glycine receptor subunit alpha-4 (Glra4) of Mus musculus (Mouse).